The chain runs to 105 residues: Cell division protein FtsB (105 aa).

Over 1–3 (MKP) the chain is Cytoplasmic. Residues 4–21 (FVLVLFALLALLQYRLWF) traverse the membrane as a helical segment. At 22 to 105 (GENSLTEYFT…RSSEQSQDNQ (84 aa)) the chain is on the periplasmic side. A coiled-coil region spans residues 38-75 (HQQSGNAELLERNEVLKEEIQDLKSGTEALEERARNEL).

It belongs to the FtsB family. In terms of assembly, part of a complex composed of FtsB, FtsL and FtsQ.

The protein localises to the cell inner membrane. Its function is as follows. Essential cell division protein. May link together the upstream cell division proteins, which are predominantly cytoplasmic, with the downstream cell division proteins, which are predominantly periplasmic. This chain is Cell division protein FtsB, found in Shewanella amazonensis (strain ATCC BAA-1098 / SB2B).